Consider the following 358-residue polypeptide: Flap endonuclease 1 (358 aa).

An N-domain region spans residues 1-103 (MGIKRLSKLI…HEFEKRTKRR (103 aa)). Residue D34 participates in Mg(2+) binding. Residues R47 and R69 each coordinate DNA. D85, E157, E159, D178, and D180 together coordinate Mg(2+). Residues 121–252 (LVSKYDRMNV…KRAFEYIKKY (132 aa)) are I-domain. Residue E157 coordinates DNA. Residues G230 and D232 each contribute to the DNA site. D232 lines the Mg(2+) pocket. The interval 346–354 (KQTRIDSFF) is interaction with PCNA.

The protein belongs to the XPG/RAD2 endonuclease family. FEN1 subfamily. As to quaternary structure, interacts with PCNA. Three molecules of FEN1 bind to one PCNA trimer with each molecule binding to one PCNA monomer. PCNA stimulates the nuclease activity without altering cleavage specificity. Requires Mg(2+) as cofactor. In terms of processing, phosphorylated. Phosphorylation upon DNA damage induces relocalization to the nuclear plasma.

The protein resides in the nucleus. Its subcellular location is the nucleolus. It is found in the nucleoplasm. It localises to the mitochondrion. In terms of biological role, structure-specific nuclease with 5'-flap endonuclease and 5'-3' exonuclease activities involved in DNA replication and repair. During DNA replication, cleaves the 5'-overhanging flap structure that is generated by displacement synthesis when DNA polymerase encounters the 5'-end of a downstream Okazaki fragment. It enters the flap from the 5'-end and then tracks to cleave the flap base, leaving a nick for ligation. Also involved in the long patch base excision repair (LP-BER) pathway, by cleaving within the apurinic/apyrimidinic (AP) site-terminated flap. Acts as a genome stabilization factor that prevents flaps from equilibrating into structures that lead to duplications and deletions. Also possesses 5'-3' exonuclease activity on nicked or gapped double-stranded DNA, and exhibits RNase H activity. Also involved in replication and repair of rDNA and in repairing mitochondrial DNA. The polypeptide is Flap endonuclease 1 (Enterocytozoon bieneusi (strain H348) (Microsporidian parasite)).